Reading from the N-terminus, the 190-residue chain is Zinc metalloproteinase/disintegrin (190 aa).

Residues 1-11 enclose the Peptidase M12B domain; the sequence is NHNPECIVNEP. The 87-residue stretch at 19–105 folds into the Disintegrin domain; that stretch reads PPVCGNELLE…ECPADVFHKN (87 aa). V21, N24, L26, E28, E31, and D34 together coordinate Ca(2+). 6 disulfide bridges follow: C33/C51, C35/C46, C45/C68, C59/C65, C64/C90, and C77/C97. A D/ECD-tripeptide motif is present at residues 83–85; that stretch reads ECD. The Ca(2+) site is built by D85, P86, E88, D100, and V101. A propeptide spanning residues 104–190 is cleaved from the precursor; sequence KNGQPCLDNY…DNSPGQNGPC (87 aa).

Belongs to the venom metalloproteinase (M12B) family. P-III subfamily. As to quaternary structure, monomer. It depends on Zn(2+) as a cofactor. As to expression, expressed by the venom gland.

Its subcellular location is the secreted. In terms of biological role, impairs hemostasis in the envenomed animal. Inhibits platelet aggregation induced by ADP, thrombin, platelet-activating factor and collagen. Acts by inhibiting fibrinogen interaction with platelet receptors GPIIb/GPIIIa (ITGA2B/ITGB3). The sequence is that of Zinc metalloproteinase/disintegrin from Gloydius brevicauda (Korean slamosa snake).